The primary structure comprises 87 residues: Small ribosomal subunit protein eS21 (87 aa).

Position 1 is an N-acetylmethionine (Met-1).

This sequence belongs to the eukaryotic ribosomal protein eS21 family. In terms of assembly, component of the small ribosomal subunit (SSU). Mature yeast ribosomes consist of a small (40S) and a large (60S) subunit. The 40S small subunit contains 1 molecule of ribosomal RNA (18S rRNA) and at least 33 different proteins. The large 60S subunit contains 3 rRNA molecules (25S, 5.8S and 5S rRNA) and at least 46 different proteins. Interacts with uS2A and uS2B, strongest interaction is with uS2B.

The protein resides in the cytoplasm. It is found in the nucleus. Its function is as follows. Component of the ribosome, a large ribonucleoprotein complex responsible for the synthesis of proteins in the cell. The small ribosomal subunit (SSU) binds messenger RNAs (mRNAs) and translates the encoded message by selecting cognate aminoacyl-transfer RNA (tRNA) molecules. The large subunit (LSU) contains the ribosomal catalytic site termed the peptidyl transferase center (PTC), which catalyzes the formation of peptide bonds, thereby polymerizing the amino acids delivered by tRNAs into a polypeptide chain. The nascent polypeptides leave the ribosome through a tunnel in the LSU and interact with protein factors that function in enzymatic processing, targeting, and the membrane insertion of nascent chains at the exit of the ribosomal tunnel. eS21 is required for the processing of the 20S rRNA-precursor to mature 18S rRNA in a late step of the maturation of 40S ribosomal subunits. Has a physiological role leading to 18S rRNA stability. This Schizosaccharomyces pombe (strain 972 / ATCC 24843) (Fission yeast) protein is Small ribosomal subunit protein eS21 (rps21).